Here is a 292-residue protein sequence, read N- to C-terminus: MILIIYLTKIMGDEMTSMDMFFFLFIFLLFIYPEMMMRYRIMKRLRCIREIERQRGTRVIAMIHRQEALTFLGIPIYKFITIEDSEEILRAIRLTPEDMPIDLIIHTPGGLALASEQIALALKEHKAKTTVIIPHYAMSGGSLIALAADEIIMDKNAVMGPVDPQIGQYPAASILEAYYRKGEKVSDETLILVDISKKAIKQMEEFVYELLKDKYGDEKAKEIAKKLTSGTWTHDYPLTVSKLKELGIEVNTNVPRKVYELLELYPQPMGAKPSVYYIPVPYSKKESEKNAK.

The helical transmembrane segment at 17-37 (SMDMFFFLFIFLLFIYPEMMM) threads the bilayer.

To M.jannaschii MJ0137.

It is found in the membrane. This is an uncharacterized protein from Methanocaldococcus jannaschii (strain ATCC 43067 / DSM 2661 / JAL-1 / JCM 10045 / NBRC 100440) (Methanococcus jannaschii).